The chain runs to 315 residues: ATP synthase gamma chain (315 aa).

Belongs to the ATPase gamma chain family. F-type ATPases have 2 components, CF(1) - the catalytic core - and CF(0) - the membrane proton channel. CF(1) has five subunits: alpha(3), beta(3), gamma(1), delta(1), epsilon(1). CF(0) has three main subunits: a, b and c.

It localises to the cellular thylakoid membrane. Functionally, produces ATP from ADP in the presence of a proton gradient across the membrane. The gamma chain is believed to be important in regulating ATPase activity and the flow of protons through the CF(0) complex. This is ATP synthase gamma chain from Synechococcus sp. (strain PCC 6716).